We begin with the raw amino-acid sequence, 306 residues long: UDP-N-acetylenolpyruvoylglucosamine reductase (306 aa).

The FAD-binding PCMH-type domain occupies 30–216; that stretch reads RIGGPVPYIL…KSKLIDFSTR (187 aa). Arg180 is a catalytic residue. The active-site Proton donor is the Ser230. Glu301 is an active-site residue.

This sequence belongs to the MurB family. The cofactor is FAD.

It localises to the cytoplasm. It carries out the reaction UDP-N-acetyl-alpha-D-muramate + NADP(+) = UDP-N-acetyl-3-O-(1-carboxyvinyl)-alpha-D-glucosamine + NADPH + H(+). It participates in cell wall biogenesis; peptidoglycan biosynthesis. Cell wall formation. In Petrotoga mobilis (strain DSM 10674 / SJ95), this protein is UDP-N-acetylenolpyruvoylglucosamine reductase.